The following is a 336-amino-acid chain: Atypical chemokine receptor 1 (336 aa).

Residues 1–63 lie on the Extracellular side of the membrane; the sequence is MGNCLHQAEL…CSLLNDSSLP (63 aa). 4 N-linked (GlcNAc...) asparagine glycosylation sites follow: asparagine 16, asparagine 27, asparagine 33, and asparagine 58. 2 cysteine pairs are disulfide-bonded: cysteine 51/cysteine 276 and cysteine 129/cysteine 195. The chain crosses the membrane as a helical span at residues 64-84; that stretch reads FFILASDLGILASSTVLFMLF. The Cytoplasmic segment spans residues 85-95; that stretch reads RPLFRWQLCPG. The helical transmembrane segment at 96-116 threads the bilayer; that stretch reads WPVLAQLAVGSALFSIVVPIL. At 117 to 129 the chain is on the extracellular side; it reads APGLGNTHSSALC. Residues 130–153 form a helical membrane-spanning segment; it reads SLGYCVWYGSAFAQALLLGCHASL. The Cytoplasmic portion of the chain corresponds to 154–166; the sequence is GPKLGAGQVPGLT. The helical transmembrane segment at 167-187 threads the bilayer; it reads LGLPVGLWGATALLTLPITLA. Residues 188–207 lie on the Extracellular side of the membrane; that stretch reads SGASDGLCTPIYSTELEALQ. A helical membrane pass occupies residues 208-228; it reads ATHAVACFAIFVLLPLGLFGA. At 229–244 the chain is on the cytoplasmic side; that stretch reads KGLKKALGMGPGPWMN. A helical membrane pass occupies residues 245–265; the sequence is ILWVWFIFWWPHGLVLGLDFL. The Extracellular portion of the chain corresponds to 266 to 287; sequence VGSKLSLLPTCLAQQVLDLLLN. The helical transmembrane segment at 288–308 threads the bilayer; that stretch reads LAEALAIVHCVATPLLLALFC. Residues 309–336 are Cytoplasmic-facing; it reads HQTTRTLLPSLPLPERWSSPVDTLGSKS.

This sequence belongs to the G-protein coupled receptor 1 family. Atypical chemokine receptor subfamily.

It is found in the early endosome. It localises to the recycling endosome. The protein resides in the membrane. Functionally, atypical chemokine receptor that controls chemokine levels and localization via high-affinity chemokine binding that is uncoupled from classic ligand-driven signal transduction cascades, resulting instead in chemokine sequestration, degradation, or transcytosis. Also known as interceptor (internalizing receptor) or chemokine-scavenging receptor or chemokine decoy receptor. Has a promiscuous chemokine-binding profile, interacting with inflammatory chemokines of both the CXC and the CC subfamilies but not with homeostatic chemokines. Acts as a receptor for chemokines including CCL2, CCL5, CCL7, CCL11, CCL13, CCL14, CCL17, CXCL5, CXCL6, IL8/CXCL8, CXCL11, GRO, RANTES, MCP-1 and TARC. May regulate chemokine bioavailability and, consequently, leukocyte recruitment through two distinct mechanisms: when expressed in endothelial cells, it sustains the abluminal to luminal transcytosis of tissue-derived chemokines and their subsequent presentation to circulating leukocytes; when expressed in erythrocytes, serves as blood reservoir of cognate chemokines but also as a chemokine sink, buffering potential surges in plasma chemokine levels. The chain is Atypical chemokine receptor 1 (ACKR1) from Saimiri boliviensis boliviensis (Bolivian squirrel monkey).